A 124-amino-acid chain; its full sequence is Succinate dehydrogenase cytochrome b556 subunit (124 aa).

Over 1–29 (MTKIKQEIYNKRPTSPHLTIYKPQISSTL) the chain is Cytoplasmic. A helical membrane pass occupies residues 30 to 55 (SILHRMTGVALFFVVSILVWWLILSK). The Periplasmic portion of the chain corresponds to 56–67 (YDNNYLQLARCC). A helical membrane pass occupies residues 68–88 (IIKICLVAFSYAWCYHLCNGI). Residue H83 coordinates heme. Over 89–103 (RHLFWDIGYGFSIRA) the chain is Cytoplasmic. The chain crosses the membrane as a helical span at residues 104 to 124 (VNITGWCVVVCSILLTMLLWV).

The protein belongs to the cytochrome b560 family. In terms of assembly, part of an enzyme complex containing four subunits: a flavoprotein, an iron-sulfur protein, plus two membrane-anchoring proteins, SdhC and SdhD. The complex can form homotrimers. Heme is required as a cofactor.

It is found in the cell inner membrane. It participates in carbohydrate metabolism; tricarboxylic acid cycle. Its function is as follows. Membrane-anchoring subunit of succinate dehydrogenase (SDH). This chain is Succinate dehydrogenase cytochrome b556 subunit (sdhC), found in Rickettsia typhi (strain ATCC VR-144 / Wilmington).